Reading from the N-terminus, the 283-residue chain is Pseudokinase OPG198 (283 aa).

Positions 1 and 30 each coordinate ATP. Positions 1–283 (MESFKYCFDN…DRLRRLFIQD (283 aa)) constitute a Protein kinase domain.

Belongs to the protein kinase superfamily. Ser/Thr protein kinase family. Poxviruses subfamily. Interacts with B1/VPK1. Interacts with host VRK1. Interacts with host VRK2.

Its subcellular location is the host nucleus. With respect to regulation, both catalytically active kinases B1/VPK1 and host VRK2 repress B12 inhibitory activity in a B1/VPK1 deletion mutant strain. In terms of biological role, pseudokinase that plays a role in viral DNA replication repression by activating the antiviral protein BANF1 and inhibiting the activity of host VRK1, a cellular modulator of BANF1. This chain is Pseudokinase OPG198 (OPG198), found in Vaccinia virus (strain Ankara) (VACV).